The chain runs to 256 residues: DNA repair protein RecO (256 aa).

The protein belongs to the RecO family.

Functionally, involved in DNA repair and RecF pathway recombination. This Shouchella clausii (strain KSM-K16) (Alkalihalobacillus clausii) protein is DNA repair protein RecO.